The following is a 1384-amino-acid chain: MEVLMAERANLVFHNKVIDGTAIKRLISRLIDHFGMAYTSHILDQVKTLGFQQATATSISLGIDDLLTIPSKGWLVQDAEQQSLILEKHHHYGNVHAVEKLRQSIEIWYATSEYLRQEMNPNFRMTDPFNPVHMMSFSGARGNASQVHQLVGMRGLMSDPQGQMIDLPIQSNLREGLSLTEYIISCYGARKGVVDTAVRQSDAGYLTRRLVEVVQHIVVRRTDCGTIRGISVSPRNKSRMMSERIFIQTLIGRVLADDIYIGSRCVAFRNQDLGIGLVNRFITFGTQPISIRTPFTCRSTSWICRLCYGRSPTHGDLVELGEAVGIIAGQSIGEPGTQLTLRTFHTGGVFTGGTAEHVRAPYNGKIKFNEDLVHSTRTRHGHPAFLCYIDLSVIIESEDIIHSVTIPPKSFLLVQNDQYVESEQVIAEIREGTYTFQFKERVRKYIYSDSEGGMHWSTDVSHAPEFTYSNVHLLPKTSHLWILSGGSCGSSLILFSIHKDQDQMNIPFLSVERKSISSLSVNNDQVSQKFFSSDFSDKKILIPNYSELNGIVGTSHYNFIYSAIFHENSDLLAKRRRNRFLIPFQSIQEQEQEKEFIPHSGISVEIPINGIFRRNSIFAFFDDPRYRRKSSGILKYGTLKADSIIQKEDMIEYRGVQKFKTKYEMKVDRFFFIPEEVHILPESSAIMVENYSIIGVDTRITLNIRSQVGGLIRVERKKKRIELKIFSGDIHFPDKTDKISRHSGILIPPGRGKTNSKESKIVKNWIYVQRITPTKKKFFVLVRPVATYEIADSINLATLFPKDLFREKDNIQLRVFNYILYGNGKPTRGISDTSIQLVRTCLVLNWDQDNKNSSLEEVRAFFVEVNTKGLIRDFIRIGLVKSHISYIRKRNNPSSEKKEGSDHSMNPFYSISPKAGILHQSLRQNHGTIRMFLNRNRNPILLILSSSNCFRIGPFNHVKYHNVINQSIKKKTSNYIKNCRAPYGTAIQILIFIHFAFTKLINQISCIKYLHLQTSNVFFPVIHSYLIDENGRIFNLDPYSNLVLNPFKLNWYFLHQNYNNNYCEETSTIISLGQFFCENVCIAKKEPYLKSGQVLIVQRDSVVIRSAKPYLATPGAKVHGHYREILYEGDTLVTFIYEKSRSGDITQGLPKVEQVLEVRSIDSISLNLEKRIKGWNRCITRILGIPWGFLIGAELTIVQSRISLVNKIKQVYRSQGVQIHNRHIEIIVRQITSKVLVSEEGMSNVFLPGELIGLLRAERTGRALEEAICYRAVLLGITRASLNTQSFISEASFQETARVLAKAALRGRIDWLKGLKENVVLGGVIPPGPGSQRIGALSTATYQHSFGKNKNYLIRGRYERYFILPQGILCLFYQIQNLPFLELH.

Zn(2+) contacts are provided by Cys-224, Cys-297, Cys-304, and Cys-307.

It belongs to the RNA polymerase beta' chain family. RpoC2 subfamily. In plastids the minimal PEP RNA polymerase catalytic core is composed of four subunits: alpha, beta, beta', and beta''. When a (nuclear-encoded) sigma factor is associated with the core the holoenzyme is formed, which can initiate transcription. It depends on Zn(2+) as a cofactor.

The protein resides in the plastid. Its subcellular location is the chloroplast. It catalyses the reaction RNA(n) + a ribonucleoside 5'-triphosphate = RNA(n+1) + diphosphate. DNA-dependent RNA polymerase catalyzes the transcription of DNA into RNA using the four ribonucleoside triphosphates as substrates. This chain is DNA-directed RNA polymerase subunit beta'', found in Sinapis alba (White mustard).